A 378-amino-acid chain; its full sequence is tRNA-specific 2-thiouridylase MnmA (378 aa).

Residues G12–S19 and M38 contribute to the ATP site. The interval N98–D100 is interaction with target base in tRNA. C103 acts as the Nucleophile in catalysis. The cysteines at positions 103 and 201 are disulfide-linked. ATP is bound at residue G127. The interval K151–Q153 is interaction with tRNA. C201 serves as the catalytic Cysteine persulfide intermediate. An interaction with tRNA region spans residues R319–Y320.

Belongs to the MnmA/TRMU family.

It localises to the cytoplasm. It carries out the reaction S-sulfanyl-L-cysteinyl-[protein] + uridine(34) in tRNA + AH2 + ATP = 2-thiouridine(34) in tRNA + L-cysteinyl-[protein] + A + AMP + diphosphate + H(+). Functionally, catalyzes the 2-thiolation of uridine at the wobble position (U34) of tRNA, leading to the formation of s(2)U34. The polypeptide is tRNA-specific 2-thiouridylase MnmA (Paracidovorax citrulli (strain AAC00-1) (Acidovorax citrulli)).